Here is a 101-residue protein sequence, read N- to C-terminus: Protein Tat (101 aa).

An interaction with human CREBBP region spans residues 1–24 (MEPVDPSLDPWNHPGSQPTTPCTK). Residues 1–48 (MEPVDPSLDPWNHPGSQPTTPCTKCYCKRCCFHCQWCFTTKGLGISYG) are transactivation. Zn(2+) contacts are provided by Cys22, Cys25, and Cys27. A cysteine-rich region spans residues 22–37 (CTKCYCKRCCFHCQWC). An N6-acetyllysine; by host PCAF modification is found at Lys28. Zn(2+) is bound by residues Cys30, His33, Cys34, and Cys37. Positions 38-48 (FTTKGLGISYG) are core. The segment covering 48 to 58 (GRKKRRQRHRT) has biased composition (basic residues). The interval 48 to 101 (GRKKRRQRHRTPQSSQVHQNSLPKQPLSQARGDPTGPKESKKEVESKAKTDPCA) is disordered. A Nuclear localization signal, RNA-binding (TAR), and protein transduction motif is present at residues 49–57 (RKKRRQRHR). Residues 49–86 (RKKRRQRHRTPQSSQVHQNSLPKQPLSQARGDPTGPKE) form an interaction with the host capping enzyme RNGTT region. N6-acetyllysine; by host EP300 and GCN5L2 is present on residues Lys50 and Lys51. Arg52 and Arg53 each carry asymmetric dimethylarginine; by host PRMT6. The segment covering 59–75 (PQSSQVHQNSLPKQPLS) has biased composition (polar residues). Residue Lys71 forms a Glycyl lysine isopeptide (Lys-Gly) (interchain with G-Cter in ubiquitin) linkage. The Cell attachment site motif lies at 78 to 80 (RGD). The segment covering 83–101 (GPKESKKEVESKAKTDPCA) has biased composition (basic and acidic residues).

Belongs to the lentiviruses Tat family. In terms of assembly, interacts with host CCNT1. Associates with the P-TEFb complex composed at least of Tat, P-TEFb (CDK9 and CCNT1), TAR RNA, RNA Pol II. Recruits the HATs CREBBP, TAF1/TFIID, EP300, PCAF and GCN5L2. Interacts with host KAT5/Tip60; this interaction targets the latter to degradation. Interacts with the host deacetylase SIRT1. Interacts with host capping enzyme RNGTT; this interaction stimulates RNGTT. Binds to host KDR, and to the host integrins ITGAV/ITGB3 and ITGA5/ITGB1. Interacts with host KPNB1/importin beta-1 without previous binding to KPNA1/importin alpha-1. Interacts with EIF2AK2. Interacts with host nucleosome assembly protein NAP1L1; this interaction may be required for the transport of Tat within the nucleus, since the two proteins interact at the nuclear rim. Interacts with host C1QBP/SF2P32; this interaction involves lysine-acetylated Tat. Interacts with the host chemokine receptors CCR2, CCR3 and CXCR4. Interacts with host DPP4/CD26; this interaction may trigger an anti-proliferative effect. Interacts with host LDLR. Interacts with the host extracellular matrix metalloproteinase MMP1. Interacts with host PRMT6; this interaction mediates Tat's methylation. Interacts with, and is ubiquitinated by MDM2/Hdm2. Interacts with host PSMC3 and HTATIP2. Interacts with STAB1; this interaction may overcome SATB1-mediated repression of IL2 and IL2RA (interleukin) in T cells by binding to the same domain than HDAC1. Interacts (when acetylated) with human CDK13, thereby increasing HIV-1 mRNA splicing and promoting the production of the doubly spliced HIV-1 protein Nef. Interacts with host TBP; this interaction modulates the activity of transcriptional pre-initiation complex. Interacts with host RELA. Interacts with host PLSCR1; this interaction negatively regulates Tat transactivation activity by altering its subcellular distribution. In terms of processing, asymmetrical arginine methylation by host PRMT6 seems to diminish the transactivation capacity of Tat and affects the interaction with host CCNT1. Acetylation by EP300, CREBBP, GCN5L2/GCN5 and PCAF regulates the transactivation activity of Tat. EP300-mediated acetylation of Lys-50 promotes dissociation of Tat from the TAR RNA through the competitive binding to PCAF's bromodomain. In addition, the non-acetylated Tat's N-terminus can also interact with PCAF. PCAF-mediated acetylation of Lys-28 enhances Tat's binding to CCNT1. Lys-50 is deacetylated by SIRT1. Post-translationally, polyubiquitination by host MDM2 does not target Tat to degradation, but activates its transactivation function and fosters interaction with CCNT1 and TAR RNA. In terms of processing, phosphorylated by EIF2AK2 on serine and threonine residues adjacent to the basic region important for TAR RNA binding and function. Phosphorylation of Tat by EIF2AK2 is dependent on the prior activation of EIF2AK2 by dsRNA.

The protein resides in the host nucleus. It localises to the host nucleolus. It is found in the host cytoplasm. The protein localises to the secreted. Its function is as follows. Transcriptional activator that increases RNA Pol II processivity, thereby increasing the level of full-length viral transcripts. Recognizes a hairpin structure at the 5'-LTR of the nascent viral mRNAs referred to as the transactivation responsive RNA element (TAR) and recruits the cyclin T1-CDK9 complex (P-TEFb complex) that will in turn hyperphosphorylate the RNA polymerase II to allow efficient elongation. The CDK9 component of P-TEFb and other Tat-activated kinases hyperphosphorylate the C-terminus of RNA Pol II that becomes stabilized and much more processive. Other factors such as HTATSF1/Tat-SF1, SUPT5H/SPT5, and HTATIP2 are also important for Tat's function. Besides its effect on RNA Pol II processivity, Tat induces chromatin remodeling of proviral genes by recruiting the histone acetyltransferases (HATs) CREBBP, EP300 and PCAF to the chromatin. This also contributes to the increase in proviral transcription rate, especially when the provirus integrates in transcriptionally silent region of the host genome. To ensure maximal activation of the LTR, Tat mediates nuclear translocation of NF-kappa-B by interacting with host RELA. Through its interaction with host TBP, Tat may also modulate transcription initiation. Tat can reactivate a latently infected cell by penetrating in it and transactivating its LTR promoter. In the cytoplasm, Tat is thought to act as a translational activator of HIV-1 mRNAs. Functionally, extracellular circulating Tat can be endocytosed by surrounding uninfected cells via the binding to several surface receptors such as CD26, CXCR4, heparan sulfate proteoglycans (HSPG) or LDLR. Neurons are rarely infected, but they internalize Tat via their LDLR. Through its interaction with nuclear HATs, Tat is potentially able to control the acetylation-dependent cellular gene expression. Modulates the expression of many cellular genes involved in cell survival, proliferation or in coding for cytokines or cytokine receptors. Tat plays a role in T-cell and neurons apoptosis. Tat induced neurotoxicity and apoptosis probably contribute to neuroAIDS. Circulating Tat also acts as a chemokine-like and/or growth factor-like molecule that binds to specific receptors on the surface of the cells, affecting many cellular pathways. In the vascular system, Tat binds to ITGAV/ITGB3 and ITGA5/ITGB1 integrins dimers at the surface of endothelial cells and competes with bFGF for heparin-binding sites, leading to an excess of soluble bFGF. The sequence is that of Protein Tat from Human immunodeficiency virus type 1 group M subtype F1 (isolate VI850) (HIV-1).